The primary structure comprises 296 residues: Pantothenate synthetase (296 aa).

31 to 38 lines the ATP pocket; the sequence is MGYLHEGH. Histidine 38 acts as the Proton donor in catalysis. Glutamine 62 provides a ligand contact to (R)-pantoate. A beta-alanine-binding site is contributed by glutamine 62. 148-151 provides a ligand contact to ATP; that stretch reads GEKD. Glutamine 154 contributes to the (R)-pantoate binding site. Residues valine 177 and 185 to 188 each bind ATP; that span reads LSSR.

It belongs to the pantothenate synthetase family. As to quaternary structure, homodimer.

It is found in the cytoplasm. It carries out the reaction (R)-pantoate + beta-alanine + ATP = (R)-pantothenate + AMP + diphosphate + H(+). It functions in the pathway cofactor biosynthesis; (R)-pantothenate biosynthesis; (R)-pantothenate from (R)-pantoate and beta-alanine: step 1/1. Catalyzes the condensation of pantoate with beta-alanine in an ATP-dependent reaction via a pantoyl-adenylate intermediate. This Deinococcus geothermalis (strain DSM 11300 / CIP 105573 / AG-3a) protein is Pantothenate synthetase.